The chain runs to 267 residues: Ras-related protein Rab-36 (267 aa).

8 residues coordinate GTP: valine 68, glycine 69, lysine 70, threonine 71, serine 72, aspartate 83, tyrosine 86, and threonine 89. Threonine 71 is a Mg(2+) binding site. Positions 76-94 (RFCKNVFDRDYKATIGVDF) match the Switch 1 motif. Mg(2+) is bound by residues threonine 89 and aspartate 112. The short motif at 113-132 (TAGQEKFKCIASAYYRGAQV) is the Switch 2 element. Positions 115, 172, 174, 203, 204, and 205 each coordinate GTP. The disordered stretch occupies residues 243–267 (GDLIQMEGSPPETQESKRPSSLGCC). Residues cysteine 266 and cysteine 267 are each lipidated (S-geranylgeranyl cysteine).

This sequence belongs to the small GTPase superfamily. Rab family. Mg(2+) serves as cofactor. In terms of tissue distribution, ubiquitously present in all tissues examined.

It localises to the golgi apparatus membrane. It catalyses the reaction GTP + H2O = GDP + phosphate + H(+). Its activity is regulated as follows. Regulated by guanine nucleotide exchange factors (GEFs) which promote the exchange of bound GDP for free GTP. Regulated by GTPase activating proteins (GAPs) which increase the GTP hydrolysis activity. Inhibited by GDP dissociation inhibitors (GDIs). Its function is as follows. The small GTPases Rab are key regulators of intracellular membrane trafficking, from the formation of transport vesicles to their fusion with membranes. Rabs cycle between an inactive GDP-bound form and an active GTP-bound form that is able to recruit to membranes different sets of downstream effectors directly responsible for vesicle formation, movement, tethering and fusion. The sequence is that of Ras-related protein Rab-36 from Homo sapiens (Human).